A 524-amino-acid polypeptide reads, in one-letter code: uncharacterized protein (524 aa).

The segment covering 83–101 (NSTPSKQAKPLQRNSPYQG) has biased composition (polar residues). Disordered regions lie at residues 83–108 (NSTPSKQAKPLQRNSPYQGNSQSENQ) and 155–179 (PPCNIETNEDDSGNNEYNNNKKRPR).

It localises to the cytoplasm. This is an uncharacterized protein from Saccharomyces cerevisiae (strain ATCC 204508 / S288c) (Baker's yeast).